A 334-amino-acid chain; its full sequence is Retinol dehydrogenase 13 (334 aa).

Ser2 is modified (N-acetylserine). 45–51 lines the NADP(+) pocket; that stretch reads GANTGIG. Ser174 is a substrate binding site. Tyr200 serves as the catalytic Proton acceptor.

This sequence belongs to the short-chain dehydrogenases/reductases (SDR) family.

It is found in the mitochondrion inner membrane. It carries out the reaction all-trans-retinol + NADP(+) = all-trans-retinal + NADPH + H(+). It functions in the pathway cofactor metabolism; retinol metabolism. Functionally, retinol dehydrogenase with a clear preference for NADP. Oxidizes all-trans-retinol, but seems to reduce all-trans-retinal with much higher efficiency. Has no activity towards steroid. The polypeptide is Retinol dehydrogenase 13 (Rdh13) (Mus musculus (Mouse)).